A 386-amino-acid polypeptide reads, in one-letter code: Synaptotagmin-5 (386 aa).

Residues 1–16 are compositionally biased toward pro residues; the sequence is MFPEPPTPGSPAPETP. Positions 1 to 21 are disordered; sequence MFPEPPTPGSPAPETPPDSSR. The Vesicular portion of the chain corresponds to 1 to 24; the sequence is MFPEPPTPGSPAPETPPDSSRIRQ. A helical transmembrane segment spans residues 25–45; that stretch reads GAVPAWVLATILLGSGLLVFS. Over 46-386 the chain is Cytoplasmic; that stretch reads SCFCLYRKRC…PDRARPIPAP (341 aa). C2 domains are found at residues 108–227 and 239–372; these read QLGR…QAWR and KLGD…AQWH. Ca(2+)-binding residues include Leu138, Asp139, Asp145, Asp197, Phe198, Asp199, Ser202, Asp205, Asp270, Asp276, Asp330, and Asp332.

This sequence belongs to the synaptotagmin family. As to quaternary structure, homodimer. Interacts with both alpha- and beta-tubulin. The cofactor is Ca(2+). As to expression, expressed in kidney, adipose tissue, lung and heart, as well as at higher levels in brain.

Its subcellular location is the cytoplasmic vesicle. The protein localises to the secretory vesicle. It is found in the synaptic vesicle membrane. The protein resides in the recycling endosome membrane. Functionally, may be involved in Ca(2+)-dependent exocytosis of secretory vesicles through Ca(2+) and phospholipid binding to the C2 domain or may serve as Ca(2+) sensors in the process of vesicular trafficking and exocytosis. Regulates the Ca(2+)-dependent secretion of norepinephrine in PC12 cells. Required for export from the endocytic recycling compartment to the cell surface. The chain is Synaptotagmin-5 (Syt5) from Rattus norvegicus (Rat).